The chain runs to 278 residues: Adenylate kinase (278 aa).

50–55 (GAGKGT) contributes to the ATP binding site. The NMP stretch occupies residues 70–99 (ATGDMLRAQVAKGTALGKQAKKIMNEGGLV). Residues T71, R76, 97–99 (GLV), 126–129 (GFPR), and Q133 each bind AMP. The LID stretch occupies residues 167-204 (GRLVHPASGRSYHRIFNPPKDDMKDDITGEPLVQRSDD). Residues R168 and 177–178 (SY) each bind ATP. Positions 201 and 212 each coordinate AMP. Q240 contributes to the ATP binding site.

It belongs to the adenylate kinase family. AK2 subfamily. As to quaternary structure, monomer.

It localises to the cytoplasm. The protein resides in the cytosol. The protein localises to the mitochondrion intermembrane space. It carries out the reaction AMP + ATP = 2 ADP. Functionally, catalyzes the reversible transfer of the terminal phosphate group between ATP and AMP. Plays an important role in cellular energy homeostasis and in adenine nucleotide metabolism. Adenylate kinase activity is critical for regulation of the phosphate utilization and the AMP de novo biosynthesis pathways. In Neurospora crassa (strain ATCC 24698 / 74-OR23-1A / CBS 708.71 / DSM 1257 / FGSC 987), this protein is Adenylate kinase (adk-1).